We begin with the raw amino-acid sequence, 437 residues long: 5-hydroxytryptamine receptor 3B (437 aa).

Residues 1–21 (MILLWSCLLVAVVGILGTATP) form the signal peptide. At 22–235 (QPGNSSLHRL…RFNVVIRRCP (214 aa)) the chain is on the extracellular side. N-linked (GlcNAc...) asparagine glycosylation is found at Asn-25, Asn-92, and Asn-134. Cys-151 and Cys-165 form a disulfide bridge. Residues 236-255 (LAYVVSLLIPSIFLMLVDLG) traverse the membrane as a helical segment. Residues 256–266 (SFYLPPNCRAR) are Cytoplasmic-facing. A helical transmembrane segment spans residues 267-284 (IVFKTNVLVGYTVFRVNM). Residues 285-295 (SDEVPRSAGCT) are Extracellular-facing. Residues 296 to 324 (SLIGVFFTVCMALLVLSLSKSILLIKFLY) traverse the membrane as a helical segment. The Cytoplasmic portion of the chain corresponds to 325–410 (EERHSEQERP…WLAILCHFDQ (86 aa)). The segment at 377-409 (FWFQLQSINNSLRTRDQVYQKEVEWLAILCHFD) is HA-stretch; determines single-channel conductance in 5-HT3 receptors. A helical membrane pass occupies residues 411 to 434 (LLFRIYLAVLGLYTVTLCSLWALW). Residues 435–437 (SRM) lie on the Extracellular side of the membrane.

The protein belongs to the ligand-gated ion channel (TC 1.A.9) family. 5-hydroxytryptamine receptor (TC 1.A.9.2) subfamily. HTR3B sub-subfamily. Forms homopentameric as well as heteropentameric serotonin-activated cation-selective channel complexes with HTR3A. The homomeric complex is not functional. Heteropentameric complexes display properties which resemble that of neuronal serotonin-activated channels in vivo. Post-translationally, N-glycosylation is required for membrane localization. In terms of tissue distribution, expressed in peripheral neurons, but not in neurons of the central nervous system.

It is found in the postsynaptic cell membrane. It localises to the cell membrane. It carries out the reaction Na(+)(in) = Na(+)(out). The enzyme catalyses K(+)(in) = K(+)(out). The catalysed reaction is Ca(2+)(in) = Ca(2+)(out). In terms of biological role, forms serotonin (5-hydroxytryptamine/5-HT3)-activated cation-selective channel complexes, which when activated cause fast, depolarizing responses in neurons. The chain is 5-hydroxytryptamine receptor 3B from Rattus norvegicus (Rat).